We begin with the raw amino-acid sequence, 64 residues long: Large ribosomal subunit protein uL30 (64 aa).

The protein belongs to the universal ribosomal protein uL30 family. As to quaternary structure, part of the 50S ribosomal subunit.

The polypeptide is Large ribosomal subunit protein uL30 (Syntrophus aciditrophicus (strain SB)).